Consider the following 203-residue polypeptide: Probable GTP-binding protein EngB (203 aa).

The EngB-type G domain occupies glycine 22 to glutamine 195. GTP is bound by residues glycine 30–serine 37, glycine 57–threonine 61, aspartate 75–glycine 78, threonine 142–aspartate 145, and valine 174–serine 176. Positions 37 and 59 each coordinate Mg(2+).

The protein belongs to the TRAFAC class TrmE-Era-EngA-EngB-Septin-like GTPase superfamily. EngB GTPase family. Requires Mg(2+) as cofactor.

Functionally, necessary for normal cell division and for the maintenance of normal septation. In Clostridioides difficile (strain 630) (Peptoclostridium difficile), this protein is Probable GTP-binding protein EngB.